A 516-amino-acid polypeptide reads, in one-letter code: Histidine ammonia-lyase (516 aa).

Residues 143–145 constitute a cross-link (5-imidazolinone (Ala-Gly)); the sequence is ASG. A 2,3-didehydroalanine (Ser) modification is found at serine 144.

It belongs to the PAL/histidase family. Post-translationally, contains an active site 4-methylidene-imidazol-5-one (MIO), which is formed autocatalytically by cyclization and dehydration of residues Ala-Ser-Gly.

Its subcellular location is the cytoplasm. It catalyses the reaction L-histidine = trans-urocanate + NH4(+). It participates in amino-acid degradation; L-histidine degradation into L-glutamate; N-formimidoyl-L-glutamate from L-histidine: step 1/3. This Koribacter versatilis (strain Ellin345) protein is Histidine ammonia-lyase.